The following is a 205-amino-acid chain: Large ribosomal subunit protein uL4 (205 aa).

Positions 43 to 97 (GKRQGTSKVKNRSAVRGGGKKPWRQKGTGRARQGSIRAPQWRGGGTVFGPTPRSY) are disordered. The segment covering 51-71 (VKNRSAVRGGGKKPWRQKGTG) has biased composition (basic residues).

It belongs to the universal ribosomal protein uL4 family. In terms of assembly, part of the 50S ribosomal subunit.

One of the primary rRNA binding proteins, this protein initially binds near the 5'-end of the 23S rRNA. It is important during the early stages of 50S assembly. It makes multiple contacts with different domains of the 23S rRNA in the assembled 50S subunit and ribosome. Functionally, forms part of the polypeptide exit tunnel. The sequence is that of Large ribosomal subunit protein uL4 from Lactobacillus acidophilus (strain ATCC 700396 / NCK56 / N2 / NCFM).